Consider the following 1492-residue polypeptide: Cystic fibrosis transmembrane conductance regulator (1492 aa).

Residues 1–78 (MQRSPIEKAN…KLVNALRRCF (78 aa)) lie on the Cytoplasmic side of the membrane. A helical transmembrane segment spans residues 79–99 (FWRFLFYGILLYFVEFTKAVQ). Positions 82-366 (FLFYGILLYF…SAIQTWYDSL (285 aa)) constitute an ABC transmembrane type-1 1 domain. The Extracellular portion of the chain corresponds to 100 to 123 (PLCLGRIIASYNAKNTYEREIAYY). The chain crosses the membrane as a helical span at residues 124–147 (LALGLCLLFVVRTLFLHPAVFGLQ). Residues 148–196 (HLGMQMRIALFSLIYKKILKMSSRVLDKIDTGQLVSLLSNNLNKFDEGV) are Cytoplasmic-facing. Residues 197–217 (AVAHFVWIAPVQVVLLMGLIW) form a helical membrane-spanning segment. Topologically, residues 218–223 (NELTEF) are extracellular. Residues 224–244 (VFCGLGFLIMLALFQAWLGKK) form a helical membrane-spanning segment. The Cytoplasmic portion of the chain corresponds to 245–299 (MMQYRDKRAGKINERLAITSEIIDNIQSVKVYCWEDAMEKIIDDIRQVELKLTRK). Residues 300–320 (VAYCRYFSSSAFFFSGFFVVF) form a helical membrane-spanning segment. Residues 321–340 (LSVVPYAFIHTIKLRRIFTT) lie on the Extracellular side of the membrane. The chain crosses the membrane as a helical span at residues 341–359 (ISYNIVLRMTVTRQFPSAI). At 360-867 (QTWYDSLGAI…YLRYVTTNRN (508 aa)) the chain is on the cytoplasmic side. ATP-binding positions include W402, S435, 459–466 (GSTGSGKS), and Q494. The ABC transporter 1 domain occupies 424–647 (NGDDGLFFSN…KPDFSSQLLG (224 aa)). Residues 655 to 840 (SAERRNSILT…EEINEEDLKE (186 aa)) form a disordered R region region. Residues 868–888 (LVFVLILCLVIFLAEVAASLA) traverse the membrane as a helical segment. The region spanning 868–1169 (LVFVLILCLV…AVNSSIDVDG (302 aa)) is the ABC transmembrane type-1 2 domain. The Extracellular segment spans residues 889–932 (GLWIISGLAINTGSQTNDTSTDLSHLSVFSKFITNGSHYYIFYI). N905 and N923 each carry an N-linked (GlcNAc...) asparagine glycan. Residues 933 to 953 (YVGLADSFLALGVIRGLPLVH) form a discontinuously helical membrane-spanning segment. Residues 954–1004 (TLVTVSKDLHKQMLHSVLQGPMTAFNKMKAGRILNRFIKDTAIIDDMLPLT) lie on the Cytoplasmic side of the membrane. The chain crosses the membrane as a helical span at residues 1005–1025 (VFDFVQLILIVVGAICVVSVL). Over 1026–1027 (QP) the chain is Extracellular. Residues 1028-1048 (YTLLAAIPVAVIFIMLRAYFL) traverse the membrane as a helical segment. Topologically, residues 1049–1109 (RTSQQLKQLE…TANWFLYLST (61 aa)) are cytoplasmic. Residues 1110–1130 (LRWFQMRIDIVFVLFFIAVTF) form a helical membrane-spanning segment. Topologically, residues 1131-1144 (IAIATHDVGEGQVG) are extracellular. The chain crosses the membrane as a helical span at residues 1145 to 1165 (IILTLAMNITSTLQWAVNSSI). The Cytoplasmic portion of the chain corresponds to 1166–1492 (DVDGLMRSVS…AEEDLQETRL (327 aa)). Residues 1220-1453 (MMVNNLTAKY…ASLFKQVFGH (234 aa)) form the ABC transporter 2 domain. ATP contacts are provided by residues Y1229 and 1254–1261 (GRTGAGKS). Residues 1465–1474 (RNSSKRKTRP) show a composition bias toward basic residues. A disordered region spans residues 1465-1492 (RNSSKRKTRPKISALQEEAEEDLQETRL). Over residues 1481–1492 (EEAEEDLQETRL) the composition is skewed to acidic residues. The short motif at 1483–1485 (AEE) is the PDZ-binding element.

This sequence belongs to the ABC transporter superfamily. ABCC family. CFTR transporter (TC 3.A.1.202) subfamily. As to quaternary structure, monomer; does not require oligomerization for channel activity. May form oligomers in the membrane. Post-translationally, phosphorylated; cAMP treatment promotes phosphorylation and activates the channel. Dephosphorylation decreases the ATPase activity (in vitro). Phosphorylation at PKA sites activates the channel. Phosphorylation at PKC sites enhances the response to phosphorylation by PKA. Expressed in the rectal gland (at protein level).

It localises to the apical cell membrane. It is found in the early endosome membrane. The protein localises to the cell membrane. Its subcellular location is the recycling endosome membrane. The protein resides in the endoplasmic reticulum membrane. The catalysed reaction is ATP + H2O + closed Cl(-) channel = ADP + phosphate + open Cl(-) channel.. The enzyme catalyses chloride(in) = chloride(out). It catalyses the reaction hydrogencarbonate(in) = hydrogencarbonate(out). It carries out the reaction ATP + H2O = ADP + phosphate + H(+). In terms of biological role, epithelial ion channel that plays an important role in the regulation of epithelial ion and water transport and fluid homeostasis. Mediates the transport of chloride ions across the cell membrane. Possesses an intrinsic ATPase activity and utilizes ATP to gate its channel; the passive flow of anions through the channel is gated by cycles of ATP binding and hydrolysis by the ATP-binding domains. The ion channel is also permeable to HCO(3)(-); selectivity depends on the extracellular chloride concentration. Exerts its function also by modulating the activity of other ion channels and transporters. Contributes to the regulation of the pH and the ion content of the epithelial fluid layer. This chain is Cystic fibrosis transmembrane conductance regulator, found in Squalus acanthias (Spiny dogfish).